The following is a 256-amino-acid chain: uncharacterized protein (256 aa).

Residues 187–223 (MEEEEISEVEDALNVLQRLCAQEEGDNKEAETNNNNY) adopt a coiled-coil conformation.

This is an uncharacterized protein from Ostreid herpesvirus 1 (isolate France) (OsHV-1).